Reading from the N-terminus, the 356-residue chain is Phosphoserine aminotransferase (356 aa).

Arg41 is a binding site for L-glutamate. Pyridoxal 5'-phosphate-binding positions include 76–77 (AS), Trp102, Thr150, Asp169, and Gln192. N6-(pyridoxal phosphate)lysine is present on Lys193. Residue 234–235 (NT) coordinates pyridoxal 5'-phosphate.

It belongs to the class-V pyridoxal-phosphate-dependent aminotransferase family. SerC subfamily. As to quaternary structure, homodimer. Pyridoxal 5'-phosphate serves as cofactor.

The protein resides in the cytoplasm. The catalysed reaction is O-phospho-L-serine + 2-oxoglutarate = 3-phosphooxypyruvate + L-glutamate. It catalyses the reaction 4-(phosphooxy)-L-threonine + 2-oxoglutarate = (R)-3-hydroxy-2-oxo-4-phosphooxybutanoate + L-glutamate. Its pathway is amino-acid biosynthesis; L-serine biosynthesis; L-serine from 3-phospho-D-glycerate: step 2/3. The protein operates within cofactor biosynthesis; pyridoxine 5'-phosphate biosynthesis; pyridoxine 5'-phosphate from D-erythrose 4-phosphate: step 3/5. Functionally, catalyzes the reversible conversion of 3-phosphohydroxypyruvate to phosphoserine and of 3-hydroxy-2-oxo-4-phosphonooxybutanoate to phosphohydroxythreonine. This Flavobacterium johnsoniae (strain ATCC 17061 / DSM 2064 / JCM 8514 / BCRC 14874 / CCUG 350202 / NBRC 14942 / NCIMB 11054 / UW101) (Cytophaga johnsonae) protein is Phosphoserine aminotransferase.